The primary structure comprises 734 residues: Polyphosphate kinase (734 aa).

Asn-67 contributes to the ATP binding site. Mg(2+) is bound by residues Arg-392 and Arg-422. A PLD phosphodiesterase domain is found at 447–481 (THLKTHSKIALVVKRINNELTSFVHLGTGNYNDKT). His-452 functions as the Phosphohistidine intermediate in the catalytic mechanism. Residues Tyr-485, Arg-581, and His-609 each contribute to the ATP site. The disordered stretch occupies residues 705–734 (KKQSVQPSGQPVHSRRGGSWMRKLKNTFKR).

Belongs to the polyphosphate kinase 1 (PPK1) family. Requires Mg(2+) as cofactor. In terms of processing, an intermediate of this reaction is the autophosphorylated ppk in which a phosphate is covalently linked to a histidine residue through a N-P bond.

The catalysed reaction is [phosphate](n) + ATP = [phosphate](n+1) + ADP. Catalyzes the reversible transfer of the terminal phosphate of ATP to form a long-chain polyphosphate (polyP). The protein is Polyphosphate kinase of Staphylococcus epidermidis (strain ATCC 12228 / FDA PCI 1200).